The primary structure comprises 731 residues: Gelsolin (731 aa).

Residues 2-125 (VVEHPEFLKA…YKKGGVASGF (124 aa)) are actin-severing. One copy of the Gelsolin-like 1 repeat lies at 25-107 (FDLVPVPPNL…VQGFESATFL (83 aa)). Tyr35 is subject to Phosphotyrosine. Gly41, Asp42, Glu73, Asp85, Gly90, and Ala92 together coordinate Ca(2+). Residues 72-75 (DESG) form an actin-actin interfilament contact point region. 111–118 (KSGLKYKK) contributes to the a 1,2-diacyl-sn-glycero-3-phospho-(1D-myo-inositol-4,5-bisphosphate) binding site. Residue Val121 participates in Ca(2+) binding. 137–145 (RLLQVKGRR) lines the a 1,2-diacyl-sn-glycero-3-phospho-(1D-myo-inositol-4,5-bisphosphate) pocket. The stretch at 147–219 (VRATEVPVSW…FEEGAEPEAM (73 aa)) is one Gelsolin-like 2 repeat. 2 residues coordinate Ca(2+): Gly162 and Asp163. Cys164 and Cys177 are disulfide-bonded. Ca(2+)-binding residues include Glu185, Asp235, Glu278, Asp279, and Glu303. One copy of the Gelsolin-like 3 repeat lies at 266–338 (DENPFAQGAL…LPEGGETPLF (73 aa)). A phosphotyrosine mark is found at Tyr358 and Tyr414. The tract at residues 383–731 (AAQHGMDDDG…LDRALAELAA (349 aa)) is actin-binding, Ca-sensitive. The stretch at 404-485 (SNKVPVDPAT…VQGKEPAHLM (82 aa)) is one Gelsolin-like 4 repeat. Gly420, Asp421, Glu451, Asp463, Gly468, Pro470, and Thr500 together coordinate Ca(2+). Lys533 carries the post-translational modification N6-acetyllysine. The Gelsolin-like 5 repeat unit spans residues 533-591 (KAGALNSNDAFVLKTPSAAYLWVGAGASEAEKTGAQELLRVLRAQPVQVAEGSEPDSFW). Residues Asn540 and Asp541 each coordinate Ca(2+). Phosphotyrosine is present on Tyr552. A Ca(2+)-binding site is contributed by Glu563. At Tyr600 the chain carries Phosphotyrosine. A Gelsolin-like 6 repeat occupies 630 to 705 (IEEVPGEFMQ…VKQGFEPPSF (76 aa)). Positions 645, 646, and 668 each coordinate Ca(2+). Thr691 bears the Phosphothreonine mark.

Belongs to the villin/gelsolin family. In terms of assembly, binds to actin and to fibronectin. Identified in a complex composed of ACTA1, COBL, GSN and TMSB4X. Interacts with the inactive form of EIF2AK2/PKR. Interacts with FLII.

The protein resides in the cytoplasm. Its subcellular location is the cytoskeleton. Functionally, calcium-regulated, actin-modulating protein that binds to the plus (or barbed) ends of actin monomers or filaments, preventing monomer exchange (end-blocking or capping). It can promote the assembly of monomers into filaments (nucleation) as well as sever filaments already formed. Plays a role in ciliogenesis. This chain is Gelsolin (GSN), found in Equus caballus (Horse).